Here is a 143-residue protein sequence, read N- to C-terminus: UPF0306 protein plu4501 (143 aa).

This sequence belongs to the UPF0306 family.

This is UPF0306 protein plu4501 from Photorhabdus laumondii subsp. laumondii (strain DSM 15139 / CIP 105565 / TT01) (Photorhabdus luminescens subsp. laumondii).